A 408-amino-acid polypeptide reads, in one-letter code: Serine-rich antigen (408 aa).

A run of 2 repeats spans residues 209–214 (SVAQSE) and 230–235 (SVAQSE). Residues 209–235 (SVAQSEEHGSDSMSQSYNTCGSVAQSE) form a 2 X 6 AA repeats of S-V-A-Q-S-E region.

This sequence belongs to the mycobacterial PPE family.

The protein is Serine-rich antigen (sra) of Mycobacterium leprae (strain TN).